The following is a 692-amino-acid chain: Ribosome-releasing factor 2, mitochondrial (692 aa).

A mitochondrion-targeting transit peptide spans methionine 1–tyrosine 29. A tr-type G domain is found at serine 31–glutamate 310. Residues alanine 40–threonine 47, aspartate 104–histidine 108, and asparagine 158–aspartate 161 each bind GTP.

The protein belongs to the TRAFAC class translation factor GTPase superfamily. Classic translation factor GTPase family. EF-G/EF-2 subfamily.

It localises to the mitochondrion. Its function is as follows. Mitochondrial GTPase that mediates the disassembly of ribosomes from messenger RNA at the termination of mitochondrial protein biosynthesis. Not involved in the GTP-dependent ribosomal translocation step during translation elongation. In Drosophila sechellia (Fruit fly), this protein is Ribosome-releasing factor 2, mitochondrial.